The sequence spans 67 residues: DNA gyrase inhibitor YacG (67 aa).

Zn(2+) is bound by residues Cys10, Cys13, Cys29, and Cys33.

It belongs to the DNA gyrase inhibitor YacG family. Interacts with GyrB. Zn(2+) is required as a cofactor.

Functionally, inhibits all the catalytic activities of DNA gyrase by preventing its interaction with DNA. Acts by binding directly to the C-terminal domain of GyrB, which probably disrupts DNA binding by the gyrase. The protein is DNA gyrase inhibitor YacG of Pasteurella multocida (strain Pm70).